The primary structure comprises 324 residues: Beta-ketoacyl-[acyl-carrier-protein] synthase III (324 aa).

Catalysis depends on residues Cys112 and His249. The ACP-binding stretch occupies residues 250–254; sequence QANRR. Asn279 is a catalytic residue.

The protein belongs to the thiolase-like superfamily. FabH family. In terms of assembly, homodimer.

The protein resides in the cytoplasm. The catalysed reaction is malonyl-[ACP] + acetyl-CoA + H(+) = 3-oxobutanoyl-[ACP] + CO2 + CoA. The protein operates within lipid metabolism; fatty acid biosynthesis. In terms of biological role, catalyzes the condensation reaction of fatty acid synthesis by the addition to an acyl acceptor of two carbons from malonyl-ACP. Catalyzes the first condensation reaction which initiates fatty acid synthesis and may therefore play a role in governing the total rate of fatty acid production. Possesses both acetoacetyl-ACP synthase and acetyl transacylase activities. Its substrate specificity determines the biosynthesis of branched-chain and/or straight-chain of fatty acids. In Streptococcus equi subsp. zooepidemicus (strain H70), this protein is Beta-ketoacyl-[acyl-carrier-protein] synthase III.